A 103-amino-acid polypeptide reads, in one-letter code: Small ribosomal subunit protein uS10 (103 aa).

This sequence belongs to the universal ribosomal protein uS10 family. As to quaternary structure, part of the 30S ribosomal subunit.

Functionally, involved in the binding of tRNA to the ribosomes. In Helicobacter hepaticus (strain ATCC 51449 / 3B1), this protein is Small ribosomal subunit protein uS10.